We begin with the raw amino-acid sequence, 843 residues long: Protein P (843 aa).

The segment at 1–177 is terminal protein domain (TP); it reads MPLSYQHFRK…FCGSPYSWEQ (177 aa). The tract at residues 178–346 is spacer; the sequence is ELQHGRLVFQ…YCLTHIVNLL (169 aa). Disordered regions lie at residues 220–273 and 289–316; these read QSRL…SSTS and LSTSKRQSSSGHAVEFHNIPPSSARSQS. A compositionally biased stretch (polar residues) spans 289–299; the sequence is LSTSKRQSSSG. The segment at 347-690 is polymerase/reverse transcriptase domain (RT); the sequence is EDWGPCTEHG…YLNLYPVARQ (344 aa). The Reverse transcriptase domain maps to 357–600; the sequence is EHNIRIPRTP…YSLNFMGYVI (244 aa). Mg(2+) contacts are provided by D429, D551, and D552.

Belongs to the hepadnaviridae P protein family.

The enzyme catalyses DNA(n) + a 2'-deoxyribonucleoside 5'-triphosphate = DNA(n+1) + diphosphate. The catalysed reaction is Endonucleolytic cleavage to 5'-phosphomonoester.. With respect to regulation, activated by host HSP70 and HSP40 in vitro to be able to bind the epsilon loop of the pgRNA. Because deletion of the RNase H region renders the protein partly chaperone-independent, the chaperones may be needed indirectly to relieve occlusion of the RNA-binding site by this domain. Inhibited by several reverse-transcriptase inhibitors: Lamivudine, Adefovir and Entecavir. Its function is as follows. Multifunctional enzyme that converts the viral RNA genome into dsDNA in viral cytoplasmic capsids. This enzyme displays a DNA polymerase activity that can copy either DNA or RNA templates, and a ribonuclease H (RNase H) activity that cleaves the RNA strand of RNA-DNA heteroduplexes in a partially processive 3'- to 5'-endonucleasic mode. Neo-synthesized pregenomic RNA (pgRNA) are encapsidated together with the P protein, and reverse-transcribed inside the nucleocapsid. Initiation of reverse-transcription occurs first by binding the epsilon loop on the pgRNA genome, and is initiated by protein priming, thereby the 5'-end of (-)DNA is covalently linked to P protein. Partial (+)DNA is synthesized from the (-)DNA template and generates the relaxed circular DNA (RC-DNA) genome. After budding and infection, the RC-DNA migrates in the nucleus, and is converted into a plasmid-like covalently closed circular DNA (cccDNA). The activity of P protein does not seem to be necessary for cccDNA generation, and is presumably released from (+)DNA by host nuclear DNA repair machinery. The sequence is that of Protein P from Hepatitis B virus genotype C subtype ad (isolate Japan/S-179/1988) (HBV-C).